Here is a 329-residue protein sequence, read N- to C-terminus: Transcription factor RAX1 (329 aa).

HTH myb-type domains are found at residues K9 to L62 and R63 to L117. 2 DNA-binding regions (H-T-H motif) span residues W38 to L62 and W90 to L113. Low complexity-rich tracts occupy residues S122 to S131 and P144 to S154. Positions S122–P162 are disordered.

In terms of tissue distribution, mostly expressed in roots. Also present in shoot tips and flower buds.

Its subcellular location is the nucleus. Transcription activator of genes involved in the regulation of meristematic competence, such as CUC2. Positively regulates axillary meristems (AMs) formation and development, especially at early phases of vegetative growth, probably by specifying a stem cell niche for AM formation. Modulates the negative regulation mediated by gibberellic acid on the timing of developmental phase transitions. The polypeptide is Transcription factor RAX1 (RAX1) (Arabidopsis thaliana (Mouse-ear cress)).